A 449-amino-acid chain; its full sequence is GTPase Der (449 aa).

2 consecutive EngA-type G domains span residues 2 to 169 (FTVA…QLPP) and 180 to 355 (VRFC…EQLT). Residues 8-15 (GRPNVGKS), 55-59 (DTGGL), 118-121 (NKSE), 186-193 (GKPNVGKS), 233-237 (DTAGI), and 298-301 (NKWD) each bind GTP. The KH-like domain maps to 356–440 (KKISTSLLND…PITLYFKSKN (85 aa)).

It belongs to the TRAFAC class TrmE-Era-EngA-EngB-Septin-like GTPase superfamily. EngA (Der) GTPase family. As to quaternary structure, associates with the 50S ribosomal subunit.

Its function is as follows. GTPase that plays an essential role in the late steps of ribosome biogenesis. The sequence is that of GTPase Der from Mycoplasma pneumoniae (strain ATCC 29342 / M129 / Subtype 1) (Mycoplasmoides pneumoniae).